We begin with the raw amino-acid sequence, 637 residues long: MELKTMPQNGANAGTQHNNNSNNKPDNNEKEAQKKEPERTNWSNGLEFLMSCISVSVGLGNVWRFPFTAYENGGGAFLIPYIIVLFLIGKPMYYLEMIIGQFTSQGTVKIWSICPSFMGVGYGQAFATICIITYYSSLLALTVYYLFVSFQSELPWSYCRDDWVNCVNSRPAEYVETLLTNASSALSRATESATNVTKLQSSSELYFLNVVIKEKSDITDGIGAPDWKLTIALFVSWVVIFLVIMRGVKSSGKAAYFLALFPYVVLFALLGRAVTLEGAVDGIIFFLQPQWGELLNPIVWKEAVVQCFFSLAVGCGPIIMFASYNRFDHGIYRDAMIVTTLDTLTSLLGGITIFAILGNLAHNLKVDNIRDVVRSGTGLAFISYPDAISKFQAVPQLFSALFFFMLFVLGIGSIVALQSTIVTIICDQFKTCKYWKVAMATSICGFLMGLVYVTPGGQWILTLVDFYGGTYVVFILAIFELAGIVWIYGLQNFCDDIEFMSNKKVSLYWRICWSFFTPIMMIVIFIYSMVTISPIKYSDTYFPVAGDVAGWVLFAVGAAQFPLWGWWYIRTHRHDSFSKSFMASLKPSEKWGPSNPETRRDWLLFKSDLAAKRAIQAKSNKMGFFRQKLYNLCGNSN.

Over residues 1 to 17 (MELKTMPQNGANAGTQH) the composition is skewed to polar residues. The segment at 1–39 (MELKTMPQNGANAGTQHNNNSNNKPDNNEKEAQKKEPER) is disordered. Over 1–47 (MELKTMPQNGANAGTQHNNNSNNKPDNNEKEAQKKEPERTNWSNGLE) the chain is Cytoplasmic. Residues 26-39 (DNNEKEAQKKEPER) show a composition bias toward basic and acidic residues. 3 helical membrane passes run 48–68 (FLMS…FPFT), 75–95 (GAFL…MYYL), and 128–148 (TICI…YLFV). 2 N-linked (GlcNAc...) asparagine glycosylation sites follow: Asn181 and Asn195. Helical transmembrane passes span 225–245 (PDWK…LVIM), 254–274 (AAYF…GRAV), 303–323 (AVVQ…MFAS), 337–357 (IVTT…FAIL), 397–417 (LFSA…IVAL), 443–463 (ICGF…ILTL), 470–490 (TYVV…IYGL), 515–535 (FFTP…ISPI), and 549–569 (AGWV…WWYI).

It belongs to the sodium:neurotransmitter symporter (SNF) (TC 2.A.22) family.

The protein localises to the membrane. Unusual broad substrate spectrum amino acid:sodium cotransporter that promotes absorption of the D isomers of essential amino acids. Neutral amino acids are the preferred substrates, especially methionine and phenylalanine. The polypeptide is Sodium-dependent nutrient amino acid transporter 1 (Drosophila virilis (Fruit fly)).